Reading from the N-terminus, the 85-residue chain is Large ribosomal subunit protein bL27 (85 aa).

The segment at 1–22 (MAHKKAGGSTRNGRDSESKRLG) is disordered.

This sequence belongs to the bacterial ribosomal protein bL27 family.

The sequence is that of Large ribosomal subunit protein bL27 from Marinomonas sp. (strain MWYL1).